A 474-amino-acid polypeptide reads, in one-letter code: tRNA-2-methylthio-N(6)-dimethylallyladenosine synthase (474 aa).

An MTTase N-terminal domain is found at 3 to 120 (KKLHIKTWGC…LPEMLNHVQG (118 aa)). Residues Cys-12, Cys-49, Cys-83, Cys-157, Cys-161, and Cys-164 each coordinate [4Fe-4S] cluster. A Radical SAM core domain is found at 143 to 375 (RAEGPTAFVS…QDRINQQVLQ (233 aa)). Positions 378–441 (RRMLGTVQRI…TNSLRGTVVR (64 aa)) constitute a TRAM domain.

Belongs to the methylthiotransferase family. MiaB subfamily. In terms of assembly, monomer. [4Fe-4S] cluster serves as cofactor.

It is found in the cytoplasm. The catalysed reaction is N(6)-dimethylallyladenosine(37) in tRNA + (sulfur carrier)-SH + AH2 + 2 S-adenosyl-L-methionine = 2-methylsulfanyl-N(6)-dimethylallyladenosine(37) in tRNA + (sulfur carrier)-H + 5'-deoxyadenosine + L-methionine + A + S-adenosyl-L-homocysteine + 2 H(+). Catalyzes the methylthiolation of N6-(dimethylallyl)adenosine (i(6)A), leading to the formation of 2-methylthio-N6-(dimethylallyl)adenosine (ms(2)i(6)A) at position 37 in tRNAs that read codons beginning with uridine. The protein is tRNA-2-methylthio-N(6)-dimethylallyladenosine synthase of Serratia proteamaculans (strain 568).